The primary structure comprises 158 residues: Protein-export protein SecB (158 aa).

Belongs to the SecB family. Homotetramer, a dimer of dimers. One homotetramer interacts with 1 SecA dimer.

It localises to the cytoplasm. Its function is as follows. One of the proteins required for the normal export of preproteins out of the cell cytoplasm. It is a molecular chaperone that binds to a subset of precursor proteins, maintaining them in a translocation-competent state. It also specifically binds to its receptor SecA. This is Protein-export protein SecB from Pectobacterium atrosepticum (strain SCRI 1043 / ATCC BAA-672) (Erwinia carotovora subsp. atroseptica).